A 237-amino-acid chain; its full sequence is Ribosomal RNA large subunit methyltransferase E (237 aa).

S-adenosyl-L-methionine contacts are provided by G76, W78, D99, D115, and D139. The active-site Proton acceptor is K179.

This sequence belongs to the class I-like SAM-binding methyltransferase superfamily. RNA methyltransferase RlmE family.

It is found in the cytoplasm. The catalysed reaction is uridine(2552) in 23S rRNA + S-adenosyl-L-methionine = 2'-O-methyluridine(2552) in 23S rRNA + S-adenosyl-L-homocysteine + H(+). Its function is as follows. Specifically methylates the uridine in position 2552 of 23S rRNA at the 2'-O position of the ribose in the fully assembled 50S ribosomal subunit. The protein is Ribosomal RNA large subunit methyltransferase E of Rhodopseudomonas palustris (strain ATCC BAA-98 / CGA009).